We begin with the raw amino-acid sequence, 429 residues long: 3-phosphoshikimate 1-carboxyvinyltransferase (429 aa).

Positions 20, 21, and 25 each coordinate 3-phosphoshikimate. Residue Lys-20 coordinates phosphoenolpyruvate. Phosphoenolpyruvate-binding residues include Gly-89 and Arg-118. 3-phosphoshikimate-binding residues include Ser-164, Ser-165, Gln-166, Ser-192, Asp-311, and Lys-338. Residue Gln-166 coordinates phosphoenolpyruvate. Catalysis depends on Asp-311, which acts as the Proton acceptor. Phosphoenolpyruvate is bound by residues Arg-342 and Arg-384.

This sequence belongs to the EPSP synthase family. Monomer.

It localises to the cytoplasm. The catalysed reaction is 3-phosphoshikimate + phosphoenolpyruvate = 5-O-(1-carboxyvinyl)-3-phosphoshikimate + phosphate. The protein operates within metabolic intermediate biosynthesis; chorismate biosynthesis. Its function is as follows. Catalyzes the transfer of the enolpyruvyl moiety of phosphoenolpyruvate (PEP) to the 5-hydroxyl of shikimate-3-phosphate (S3P) to produce enolpyruvyl shikimate-3-phosphate and inorganic phosphate. The polypeptide is 3-phosphoshikimate 1-carboxyvinyltransferase (Methanococcus maripaludis (strain C6 / ATCC BAA-1332)).